The primary structure comprises 290 residues: uncharacterized protein (290 aa).

The signal sequence occupies residues 1 to 25; sequence MNKKSILSKTSLGSLFFLFGTALSA. Cysteine 26 carries the N-palmitoyl cysteine lipid modification. Cysteine 26 is lipidated: S-diacylglycerol cysteine. Residues 183–203 form a disordered region; sequence GTDSKGSGSNNQNGGVTEKDF. Residues 186 to 197 are compositionally biased toward low complexity; sequence SKGSGSNNQNGG.

It belongs to the MG439/MG440 family.

It localises to the cell membrane. This is an uncharacterized protein from Mycoplasma pneumoniae (strain ATCC 29342 / M129 / Subtype 1) (Mycoplasmoides pneumoniae).